Reading from the N-terminus, the 398-residue chain is Flavin-containing monooxygenase ustF1 (398 aa).

The N-terminal stretch at 1–22 is a signal peptide; it reads MTVSQVRRVAVIGAGISGVVST. Residue 13 to 18 coordinates FAD; sequence GAGISG. N-linked (GlcNAc...) asparagine glycans are attached at residues Asn53, Asn57, Asn119, and Asn126. 194-199 lines the NADP(+) pocket; the sequence is GGGVSS. Asn236, Asn243, and Asn271 each carry an N-linked (GlcNAc...) asparagine glycan.

This sequence belongs to the FMO family.

It participates in mycotoxin biosynthesis. Its function is as follows. Flavin-containing monooxygenase; part of the gene cluster that mediates the biosynthesis of the secondary metabolite ustiloxin B, an antimitotic tetrapeptide. First, ustA is processed by the subtilisin-like endoprotease Kex2 that is outside the ustiloxin B gene cluster, at the C-terminal side of Arg-Lys, after transfer to Golgi apparatus through the endoplasmic reticulum (ER). Cleavage by KEX2 generates 16 peptides YAIG-I to YAIG-XVI. To process the precursor peptide further, at least two peptidases are necessary to cleave the N-terminal and C-terminal sides of the Tyr-Ala-Ile-Gly core peptide which serves as backbone for the synthesis of ustiloxin B, through cyclization and modification of the tyrosine with a non-protein coding amino acid, norvaline. One of the two peptidases must be the serine peptidase ustP; and the other pepdidase is probably ustH. Macrocyclization of the core peptide derived from ustA requires the tyrosinase ustQ, as well as the homologous oxidases ustYa and ustYb, and leads to the production of the first cyclization product N-desmethylustiloxin F. For the formation of N-desmethylustiloxin F, three oxidation steps are required, hydroxylation at the benzylic position, hydroxylation at either the aromatic ring of Tyr or beta-position of Ile, and oxidative cyclization. UstQ may catalyze the oxidation of a phenol moiety, whereas the ustYa and ustYb are most likely responsible for the remaining two-step oxidations. N-desmethylustiloxin F is then methylated by ustM to yield ustiloxin F which in turn substrate of the cytochrome P450 monooxygenase ustC which catalyzes the formation of S-deoxyustiloxin H. The flavoprotein monooxygenases ustF1 and ustF2 then participate in the modification of the side chain of S-deoxyustiloxin H, leading to the synthesis of an oxime intermediate, via ustiloxin H. Finally, carboxylative dehydration performed by the cysteine desulfurase-like protein ustD yields ustiloxin B. The chain is Flavin-containing monooxygenase ustF1 from Aspergillus flavus (strain ATCC 200026 / FGSC A1120 / IAM 13836 / NRRL 3357 / JCM 12722 / SRRC 167).